Consider the following 632-residue polypeptide: U-box domain-containing protein 14 (632 aa).

Residues V247–E321 form the U-box domain. 5 ARM repeats span residues V377–I416, E418–V457, D459–I498, Q500–T539, and Q541–I580.

In terms of assembly, homodimer. Interacts with SNL1. Binds to SD11, SD16, SD17, SD18, SD113, SD129 and SD25. As to expression, expressed in flowers, green siliques, seeds and rosette leaves.

It carries out the reaction S-ubiquitinyl-[E2 ubiquitin-conjugating enzyme]-L-cysteine + [acceptor protein]-L-lysine = [E2 ubiquitin-conjugating enzyme]-L-cysteine + N(6)-ubiquitinyl-[acceptor protein]-L-lysine.. It functions in the pathway protein modification; protein ubiquitination. Functions as an E3 ubiquitin ligase with specific E2 ubiquitin-conjugating enzymes. Undergoes auto-ubiquitination. The chain is U-box domain-containing protein 14 (PUB14) from Arabidopsis thaliana (Mouse-ear cress).